Reading from the N-terminus, the 225-residue chain is Respiratory nitrate reductase 1 gamma chain (225 aa).

Met1 is modified (N-formylmethionine). Over 1-3 (MQF) the chain is Periplasmic. A helical membrane pass occupies residues 4-29 (LNMFFFDIYPYIAGAVFLIGSWLRYD). The Cytoplasmic segment spans residues 30-47 (YGQYTWRAASSQMLDRKG). A helical transmembrane segment spans residues 48–70 (MNLASNLFHIGILGIFVGHFFGM). Residues His56 and His66 each coordinate heme b. Over 71 to 82 (LTPHWMYEAWLP) the chain is Periplasmic. The chain crosses the membrane as a helical span at residues 83–112 (IEVKQKMAMFAGGASGVLCLIGGVLLLKRR). Residues 113–124 (LFSPRVRATTTG) are Cytoplasmic-facing. The chain crosses the membrane as a helical span at residues 125–148 (ADILILSLLVIQCALGLLTIPFSA). The Periplasmic portion of the chain corresponds to 149 to 182 (QHMDGSEMMKLVGWAQSVVTFHGGASQHLDGVAF). Residues 183–198 (IFRLHLVLGMTLFLLF) form a helical membrane-spanning segment. His187 and His205 together coordinate heme b. The Cytoplasmic portion of the chain corresponds to 199–225 (PFSRLIHIWSVPVEYLTRKYQLVRARH).

As to quaternary structure, dimer of heterotrimers each composed of an alpha, a beta and a gamma chain. Alpha and beta are catalytic chains; gamma chains are involved in binding the enzyme complex to the cytoplasmic membrane. Heme serves as cofactor.

The protein resides in the cell inner membrane. The catalysed reaction is nitrate + a quinol = a quinone + nitrite + H2O. In terms of biological role, the nitrate reductase enzyme complex allows E.coli to use nitrate as an electron acceptor during anaerobic growth. The gamma chain is a membrane-embedded heme-iron unit resembling cytochrome b, which transfers electrons from quinones to the beta subunit. This is Respiratory nitrate reductase 1 gamma chain (narI) from Escherichia coli (strain K12).